The sequence spans 431 residues: Adenylosuccinate synthetase (431 aa).

GTP contacts are provided by residues 12–18 and 40–42; these read GDEGKGK and GHT. Aspartate 13 acts as the Proton acceptor in catalysis. Positions 13 and 40 each coordinate Mg(2+). Residues 13 to 16, 38 to 41, threonine 131, arginine 145, glutamine 225, threonine 240, and arginine 304 contribute to the IMP site; these read DEGK and NAGH. Residue histidine 41 is the Proton donor of the active site. Position 300–306 (300–306) interacts with substrate; that stretch reads TVTGRKR. GTP contacts are provided by residues arginine 306, 332–334, and 414–416; these read KLD and STS.

It belongs to the adenylosuccinate synthetase family. As to quaternary structure, homodimer. It depends on Mg(2+) as a cofactor.

The protein resides in the cytoplasm. The enzyme catalyses IMP + L-aspartate + GTP = N(6)-(1,2-dicarboxyethyl)-AMP + GDP + phosphate + 2 H(+). Its pathway is purine metabolism; AMP biosynthesis via de novo pathway; AMP from IMP: step 1/2. In terms of biological role, plays an important role in the de novo pathway of purine nucleotide biosynthesis. Catalyzes the first committed step in the biosynthesis of AMP from IMP. In Roseobacter denitrificans (strain ATCC 33942 / OCh 114) (Erythrobacter sp. (strain OCh 114)), this protein is Adenylosuccinate synthetase.